Here is a 591-residue protein sequence, read N- to C-terminus: Frizzled-9 (591 aa).

Residues 1-22 form the signal peptide; that stretch reads MAVAPLRGALLLWQLLAAGGAA. At 23–229 the chain is on the extracellular side; that stretch reads LEIGRFDPER…EVFWSRRDKD (207 aa). An FZ domain is found at 34–155; the sequence is RGAAPCQAVE…NDPHALCMEA (122 aa). 5 disulfides stabilise this stretch: Cys39–Cys100, Cys47–Cys93, Cys84–Cys122, Cys111–Cys152, and Cys115–Cys139. Asn53 carries N-linked (GlcNAc...) asparagine glycosylation. A required for Wnt-activated receptor activity region spans residues 58-172; that stretch reads PNLLGHTSQG…PAEPHKGLGM (115 aa). The N-linked (GlcNAc...) asparagine glycan is linked to Asn158. A helical membrane pass occupies residues 230–250; the sequence is FALVWMAVWSALCFFSTAFTV. The Cytoplasmic segment spans residues 251–266; sequence LTFLLEPHRFQYPERP. The chain crosses the membrane as a helical span at residues 267-287; it reads IIFLSMCYNVYSLAFLIRAVA. Residues 288-315 are Extracellular-facing; the sequence is GAQSVACDQEAGALYVIQEGLENTGCTL. Residues 316-336 form a helical membrane-spanning segment; sequence VFLLLYYFGMASSLWWVVLTL. The Cytoplasmic segment spans residues 337–355; the sequence is TWFLAAGKKWGHEAIEAHG. A helical transmembrane segment spans residues 356 to 376; the sequence is SYFHMAAWGLPALKTIVILTL. The Extracellular segment spans residues 377–400; it reads RKVAGDELTGLCYVASTDAAALTG. Residues 401–421 traverse the membrane as a helical segment; the sequence is FVLVPLSGYLVLGSSFLLTGF. Residues 422-447 lie on the Cytoplasmic side of the membrane; the sequence is VALFHIRKIMKTGGTNTEKLEKLMVK. The helical transmembrane segment at 448 to 468 threads the bilayer; the sequence is IGVFSILYTVPATCVIVCYVY. At 469–508 the chain is on the extracellular side; the sequence is ERLNMDFWRLRATEQPCAAAAGPGGRRDCSLPGGSVPTVA. Residues 509 to 529 traverse the membrane as a helical segment; the sequence is VFMLKIFMSLVVGITSGVWVW. Topologically, residues 530–591 are cytoplasmic; the sequence is SSKTFQTWQS…DPSLENPTHL (62 aa). A Lys-Thr-X-X-X-Trp motif, mediates interaction with the PDZ domain of Dvl family members motif is present at residues 532-537; it reads KTFQTW. Residues 554 to 591 are required for CTNNB1 accumulation and TCF transcription factor activity; the sequence is ACRAPGSYGRGTHCHYKAPTVVLHMTKTDPSLENPTHL.

It belongs to the G-protein coupled receptor Fz/Smo family. Ubiquitinated by ZNRF3, leading to its degradation by the proteasome. In terms of tissue distribution, expressed predominantly in adult and fetal brain, testis, eye, skeletal muscle and kidney. Moderately expressed in pancreas, thyroid, adrenal cortex, small intestine and stomach. Detected in fetal liver and kidney. Expressed in neural progenitor cells.

The protein localises to the cell membrane. Functionally, receptor for WNT2 that is coupled to the beta-catenin canonical signaling pathway, which leads to the activation of disheveled proteins, inhibition of GSK-3 kinase, nuclear accumulation of beta-catenin and activation of Wnt target genes. Plays a role in neuromuscular junction (NMJ) assembly by negatively regulating the clustering of acetylcholine receptors (AChR) through the beta-catenin canonical signaling pathway. May play a role in neural progenitor cells (NPCs) viability through the beta-catenin canonical signaling pathway by negatively regulating cell cycle arrest leading to inhibition of neuron apoptotic process. During hippocampal development, regulates neuroblast proliferation and apoptotic cell death. Controls bone formation through non canonical Wnt signaling mediated via ISG15. Positively regulates bone regeneration through non canonical Wnt signaling. The chain is Frizzled-9 (FZD9) from Homo sapiens (Human).